A 210-amino-acid chain; its full sequence is 7-carboxy-7-deazaguanine synthase (210 aa).

Residues 12-14 and arginine 27 contribute to the substrate site; that span reads LQG. The Radical SAM core domain maps to 18 to 210; that stretch reads QAGKAAVFCR…VQTHKYLGLP (193 aa). The [4Fe-4S] cluster site is built by cysteine 31, cysteine 46, and cysteine 49. Mg(2+) is bound at residue threonine 51. Residue threonine 90 participates in substrate binding. S-adenosyl-L-methionine is bound by residues glycine 92, 133 to 135, and 173 to 176; these read SPK and QPMD. A substrate-binding site is contributed by proline 210.

This sequence belongs to the radical SAM superfamily. 7-carboxy-7-deazaguanine synthase family. In terms of assembly, homodimer. [4Fe-4S] cluster is required as a cofactor. S-adenosyl-L-methionine serves as cofactor. Requires Mg(2+) as cofactor.

It carries out the reaction 6-carboxy-5,6,7,8-tetrahydropterin + H(+) = 7-carboxy-7-deazaguanine + NH4(+). The protein operates within purine metabolism; 7-cyano-7-deazaguanine biosynthesis. Functionally, catalyzes the complex heterocyclic radical-mediated conversion of 6-carboxy-5,6,7,8-tetrahydropterin (CPH4) to 7-carboxy-7-deazaguanine (CDG), a step common to the biosynthetic pathways of all 7-deazapurine-containing compounds. The polypeptide is 7-carboxy-7-deazaguanine synthase (Caulobacter vibrioides (strain ATCC 19089 / CIP 103742 / CB 15) (Caulobacter crescentus)).